The chain runs to 154 residues: Cytochrome c' (154 aa).

An N-terminal signal peptide occupies residues 1–23 (MKHVLASTAAGLMALGLASSAIA). Heme c is bound by residues Arg35, Gln36, Arg95, Cys144, Cys147, and His148.

As to quaternary structure, homodimer. Post-translationally, binds 1 heme c group covalently per subunit.

Functionally, cytochrome c' is the most widely occurring bacterial c-type cytochrome. Cytochromes c' are high-spin proteins and the heme has no sixth ligand. Their exact function is not known. The protein is Cytochrome c' (cycA) of Allochromatium vinosum (strain ATCC 17899 / DSM 180 / NBRC 103801 / NCIMB 10441 / D) (Chromatium vinosum).